The sequence spans 207 residues: Guanylate kinase (207 aa).

A Guanylate kinase-like domain is found at 4–184 (GLLFIVSAPS…AVSDLYKIIR (181 aa)). Residue 11–18 (APSGTGKS) participates in ATP binding.

Belongs to the guanylate kinase family.

It localises to the cytoplasm. The enzyme catalyses GMP + ATP = GDP + ADP. Its function is as follows. Essential for recycling GMP and indirectly, cGMP. The polypeptide is Guanylate kinase (Buchnera aphidicola subsp. Baizongia pistaciae (strain Bp)).